Here is a 388-residue protein sequence, read N- to C-terminus: Processive diacylglycerol beta-glucosyltransferase (388 aa).

This sequence belongs to the glycosyltransferase 28 family. UgtP subfamily.

It localises to the cell membrane. It catalyses the reaction a 1,2-diacyl-3-O-(beta-D-glucopyranosyl)-sn-glycerol + UDP-alpha-D-glucose = a 1,2-diacyl-3-O-(beta-D-Glc-(1-&gt;6)-beta-D-Glc)-sn-glycerol + UDP + H(+). It carries out the reaction a 1,2-diacyl-3-O-(beta-D-Glc-(1-&gt;6)-beta-D-Glc)-sn-glycerol + UDP-alpha-D-glucose = a 1,2-diacyl-3-O-(beta-D-Glc-(1-&gt;6)-beta-D-Glc-(1-&gt;6)-beta-D-Glc)-sn-glycerol + UDP + H(+). The catalysed reaction is a 1,2-diacyl-sn-glycerol + UDP-alpha-D-glucose = a 1,2-diacyl-3-O-(beta-D-glucopyranosyl)-sn-glycerol + UDP + H(+). It participates in glycolipid metabolism; diglucosyl-diacylglycerol biosynthesis. Processive glucosyltransferase involved in the biosynthesis of both the bilayer- and non-bilayer-forming membrane glucolipids. Is able to successively transfer up to three glucosyl residues to diacylglycerol (DAG), thereby catalyzing the formation of beta-monoglucosyl-DAG (3-O-(beta-D-glucopyranosyl)-1,2-diacyl-sn-glycerol), beta-diglucosyl-DAG (3-O-(beta-D-glucopyranosyl-beta-(1-&gt;6)-D-glucopyranosyl)-1,2-diacyl-sn-glycerol) and beta-triglucosyl-DAG (3-O-(beta-D-glucopyranosyl-beta-(1-&gt;6)-D-glucopyranosyl-beta-(1-&gt;6)-D-glucopyranosyl)-1,2-diacyl-sn-glycerol). Beta-diglucosyl-DAG is the predominant glycolipid found in Bacillales and is also used as a membrane anchor for lipoteichoic acid (LTA). The sequence is that of Processive diacylglycerol beta-glucosyltransferase from Bacillus cereus (strain G9842).